Consider the following 620-residue polypeptide: Chaperone protein HscA homolog (620 aa).

This sequence belongs to the heat shock protein 70 family.

In terms of biological role, chaperone involved in the maturation of iron-sulfur cluster-containing proteins. Has a low intrinsic ATPase activity which is markedly stimulated by HscB. The protein is Chaperone protein HscA homolog of Acinetobacter baumannii (strain SDF).